The sequence spans 172 residues: Translationally-controlled tumor protein homolog (172 aa).

A TCTP domain is found at 1 to 172 (MIIYKDTVTE…FKDGLISEKC (172 aa)).

Belongs to the TCTP family.

The protein resides in the cytoplasm. Its function is as follows. Involved in calcium binding and microtubule stabilization. The sequence is that of Translationally-controlled tumor protein homolog (tpt1) from Xenopus tropicalis (Western clawed frog).